The sequence spans 112 residues: Beta-defensin 126 (112 aa).

The first 20 residues, 1-20 (MKSLLFTLAVFMLLAQLVSG), serve as a signal peptide directing secretion. Positions 21–63 (NWYVKKCLNDVGICKKKCKPEELHVKNGRAMCGKQRDCCVPAD) are in vitro binds to LPS, mediates antimicrobial activity and inhibits LPS-mediated inflammation. Cystine bridges form between C27-C58, C34-C52, and C38-C59.

It belongs to the beta-defensin family. As to quaternary structure, homodimer or homooligomer; disulfide-linked. O-glycosylated; glycans contain alpha(2,3)-linked sialic acids.

The protein resides in the secreted. Functionally, highly glycosylated atypical beta-defensin involved in several aspects of sperm function. Facilitates sperm transport in the female reproductive tract and contributes to sperm protection against immunodetection; both functions are probably implicating the negative surface charge provided by its O-linked oligosaccharides in the sperm glycocalyx. Involved in binding of sperm to oviductal epithelial cells to form a sperm reservoir until ovulation. Release from the sperm surface during capacitation and ovaluation by an elevation of oviductal fluid pH is unmasking other surface components and allows sperm to penetrate the cumulus matrix and bind to the zona pellucida of the oocyte. In vitro has antimicrobial activity and may inhibit LPS-mediated inflammation. This is Beta-defensin 126 (DEFB126) from Hylobates lar (Lar gibbon).